The primary structure comprises 243 residues: MGHKIHPNGLRLGITQEHRSRWYASSKTYPLLLQEDDRIRVFIQKKYGAAGISDVLIARKADQLEVELKTARPGVIVGRQGSGIEELRSGIQKTIGDRSRQVRINVVEIERVDADAHLLAEYIAQQLEKRVAFRRTIRMAVQRAQRAGVLGLKIQVGGRLNGAEIARSEWTREGRVPLHTLRAEIDYANKTANTTYGVLGIKVWVFKGEVLSKEEQPLPVGASPRRKGNRRPQQFEDRSNDGK.

The KH type-2 domain occupies 39 to 110 (IRVFIQKKYG…QVRINVVEIE (72 aa)). The disordered stretch occupies residues 216–243 (QPLPVGASPRRKGNRRPQQFEDRSNDGK). A compositionally biased stretch (basic and acidic residues) spans 233–243 (QQFEDRSNDGK).

This sequence belongs to the universal ribosomal protein uS3 family. As to quaternary structure, part of the 30S ribosomal subunit. Forms a tight complex with proteins S10 and S14.

Binds the lower part of the 30S subunit head. Binds mRNA in the 70S ribosome, positioning it for translation. The chain is Small ribosomal subunit protein uS3 from Prochlorococcus marinus (strain SARG / CCMP1375 / SS120).